The primary structure comprises 905 residues: Tight junction protein ZO-3 (905 aa).

One can recognise a PDZ 1 domain in the interval 11–93 (TATLYKDPRR…TANVTVKRPR (83 aa)). A disordered region spans residues 92-167 (PRRVQLPATK…GGGSEANGLD (76 aa)). Phosphoserine occurs at positions 111 and 128. The segment covering 124 to 133 (GDSSSGSGRS) has biased composition (low complexity). Residues 139-155 (RRSRAGRRGRVGSHGRR) show a composition bias toward basic residues. Ser156, Ser157, Ser161, Ser195, and Ser311 each carry phosphoserine. Positions 187-264 (SVLVKRRNSE…ELTLLVLRDS (78 aa)) constitute a PDZ 2 domain. A disordered region spans residues 289–367 (LTSELSQAPP…QSLEDRGYSP (79 aa)). Residue Thr317 is modified to Phosphothreonine. Phosphoserine occurs at positions 319, 343, and 359. Residues 368–434 (DTRVVSFPKG…LTREEAVQFL (67 aa)) form the PDZ 3 domain. Residues 464 to 541 (GDSFYIRTHF…PNQSRAEQLA (78 aa)) enclose the SH3 domain. Residues 573-754 (RRGTKKASTQ…WYQEVKAVIQ (182 aa)) enclose the Guanylate kinase-like domain. Ser584 carries the post-translational modification Phosphoserine. Disordered stretches follow at residues 773 to 818 (EDLD…PQDV) and 850 to 905 (TDKW…ATDL). The segment covering 851-877 (DKWETQADSHYTQDQRRQDSMRTYKHE) has biased composition (basic and acidic residues). 2 positions are modified to phosphoserine: Ser891 and Ser892.

It belongs to the MAGUK family. As to quaternary structure, interacts with occludin OCLN, claudins and TPJ1. Interacts with PATJ. Interacts with UBN1. Interacts with FASLG. Interacts with CCND1. In terms of processing, phosphorylated. Is concentrated in various types of epithelium, in tissues such as the lung, liver and kidney, but not in endothelium or at cadherin-based cell-cell adhesion sites.

It is found in the cell membrane. The protein localises to the cell junction. Its subcellular location is the tight junction. The protein resides in the nucleus. Its function is as follows. Tjp1, Tjp2, and Tjp3 are closely related scaffolding proteins that link tight junction (TJ) transmembrane proteins such as claudins, junctional adhesion molecules, and occludin to the actin cytoskeleton. The tight junction acts to limit movement of substances through the paracellular space and as a boundary between the compositionally distinct apical and basolateral plasma membrane domains of epithelial and endothelial cells. Binds and recruits PatJ to tight junctions where it connects and stabilizes apical and lateral components of tight junctions. Promotes cell-cycle progression through the sequestration of cyclin D1 (Ccnd1) at tight junctions during mitosis which prevents Ccnd1 degradation during M-phase and enables S-phase transition. With Tjp1 and Tjp2, participates in the junctional retention and stability of the transcription factor DbpA, but is not involved in its shuttling to the nucleus. Contrary to Tjp2, Tjp3 is dispensable for individual viability, embryonic development, epithelial differentiation, and the establishment of TJs, at least in the laboratory environment. This chain is Tight junction protein ZO-3 (Tjp3), found in Mus musculus (Mouse).